A 75-amino-acid chain; its full sequence is uncharacterized protein (75 aa).

The LysM domain maps to 29–72 (EVYHVESGDTLWTIAKSFEIPVQQLMNLNKLSSDRIYPGQIIKI).

This is an uncharacterized protein from Bacillus subtilis (strain 168).